The chain runs to 278 residues: Digeranylgeranylglyceryl phosphate synthase (278 aa).

A run of 7 helical transmembrane segments spans residues Leu12 to Phe32, Ile34 to Gly54, Leu91 to Val111, Val142 to Cys162, Phe204 to Ile224, Tyr226 to Met246, and Ser257 to Phe277.

This sequence belongs to the UbiA prenyltransferase family. DGGGP synthase subfamily. It depends on Mg(2+) as a cofactor.

It is found in the cell membrane. It catalyses the reaction sn-3-O-(geranylgeranyl)glycerol 1-phosphate + (2E,6E,10E)-geranylgeranyl diphosphate = 2,3-bis-O-(geranylgeranyl)-sn-glycerol 1-phosphate + diphosphate. It functions in the pathway membrane lipid metabolism; glycerophospholipid metabolism. In terms of biological role, prenyltransferase that catalyzes the transfer of the geranylgeranyl moiety of geranylgeranyl diphosphate (GGPP) to the C2 hydroxyl of (S)-3-O-geranylgeranylglyceryl phosphate (GGGP). This reaction is the second ether-bond-formation step in the biosynthesis of archaeal membrane lipids. The polypeptide is Digeranylgeranylglyceryl phosphate synthase (Methanococcus maripaludis (strain C6 / ATCC BAA-1332)).